The sequence spans 561 residues: Tudor and KH domain-containing protein (561 aa).

KH domains lie at 52 to 115 (DIEI…KAAI) and 124 to 190 (PVSE…KHLI). Residues K65, K76, K110, K112, K152, K175, K181, K187, K193, K256, and K267 each participate in a glycyl lysine isopeptide (Lys-Gly) (interchain with G-Cter in ubiquitin) cross-link. The interval 219–262 (SVRREDMTEPGGAGEPALWKNTSSSMEPTAPLVTPPPKGGGDMA) is disordered. Phosphoserine is present on S278. One can recognise a Tudor domain in the interval 353 to 412 (TVHVGDIVAAPLPTNGSWYRARVLGTLENGNLDLYFVDFGDNGDCPLKDLRALRSDFLSL). Glycyl lysine isopeptide (Lys-Gly) (interchain with G-Cter in ubiquitin) cross-links involve residues K479, K510, and K529.

It belongs to the Tdrkh family. As to quaternary structure, interacts with (symmetrically methylated) PIWIL1, PIWIL2 and PIWIL4. Post-translationally, ubiquitinated by PRKN during mitophagy, leading to its degradation and enhancement of mitophagy. Deubiquitinated by USP30.

It is found in the cytoplasm. The protein resides in the mitochondrion. Participates in the primary piRNA biogenesis pathway and is required during spermatogenesis to repress transposable elements and prevent their mobilization, which is essential for the germline integrity. The piRNA metabolic process mediates the repression of transposable elements during meiosis by forming complexes composed of piRNAs and Piwi proteins and govern the methylation and subsequent repression of transposons. Required for the final steps of primary piRNA biogenesis by participating in the processing of 31-37 nt intermediates into mature piRNAs. May act in pi-bodies and piP-bodies by transferring piRNA precursors or intermediates to or between these granules. The sequence is that of Tudor and KH domain-containing protein (TDRKH) from Homo sapiens (Human).